The primary structure comprises 352 residues: Histidinol-phosphate aminotransferase (352 aa).

K216 carries the N6-(pyridoxal phosphate)lysine modification.

This sequence belongs to the class-II pyridoxal-phosphate-dependent aminotransferase family. Histidinol-phosphate aminotransferase subfamily. The cofactor is pyridoxal 5'-phosphate.

The catalysed reaction is L-histidinol phosphate + 2-oxoglutarate = 3-(imidazol-4-yl)-2-oxopropyl phosphate + L-glutamate. The protein operates within amino-acid biosynthesis; L-histidine biosynthesis; L-histidine from 5-phospho-alpha-D-ribose 1-diphosphate: step 7/9. The polypeptide is Histidinol-phosphate aminotransferase (Methanoculleus marisnigri (strain ATCC 35101 / DSM 1498 / JR1)).